The following is a 309-amino-acid chain: tRNA dimethylallyltransferase (309 aa).

14-21 contributes to the ATP binding site; sequence GPTASGKS. Substrate is bound at residue 16–21; that stretch reads TASGKS. The segment at 39-42 is interaction with substrate tRNA; that stretch reads DSMQ.

Belongs to the IPP transferase family. Monomer. Mg(2+) serves as cofactor.

The enzyme catalyses adenosine(37) in tRNA + dimethylallyl diphosphate = N(6)-dimethylallyladenosine(37) in tRNA + diphosphate. Functionally, catalyzes the transfer of a dimethylallyl group onto the adenine at position 37 in tRNAs that read codons beginning with uridine, leading to the formation of N6-(dimethylallyl)adenosine (i(6)A). In Geobacter metallireducens (strain ATCC 53774 / DSM 7210 / GS-15), this protein is tRNA dimethylallyltransferase.